A 164-amino-acid chain; its full sequence is NADPH-dependent 7-cyano-7-deazaguanine reductase (164 aa).

The active-site Thioimide intermediate is the Cys-55. Asp-62 serves as the catalytic Proton donor. Residues 77–79 and 96–97 each bind substrate; these read VES and HE.

It belongs to the GTP cyclohydrolase I family. QueF type 1 subfamily.

Its subcellular location is the cytoplasm. It catalyses the reaction 7-aminomethyl-7-carbaguanine + 2 NADP(+) = 7-cyano-7-deazaguanine + 2 NADPH + 3 H(+). It functions in the pathway tRNA modification; tRNA-queuosine biosynthesis. In terms of biological role, catalyzes the NADPH-dependent reduction of 7-cyano-7-deazaguanine (preQ0) to 7-aminomethyl-7-deazaguanine (preQ1). This chain is NADPH-dependent 7-cyano-7-deazaguanine reductase, found in Bacillus velezensis (strain DSM 23117 / BGSC 10A6 / LMG 26770 / FZB42) (Bacillus amyloliquefaciens subsp. plantarum).